The following is a 360-amino-acid chain: Probable cinnamyl alcohol dehydrogenase 6 (360 aa).

Cysteine 48 contributes to the Zn(2+) binding site. Threonine 50 provides a ligand contact to NADP(+). Histidine 70, glutamate 71, cysteine 101, cysteine 104, cysteine 107, cysteine 115, and cysteine 164 together coordinate Zn(2+). Residues threonine 168, 192-197 (GLGGLG), 215-220 (STSPAK), threonine 255, glycine 279, and 302-304 (SMT) each bind NADP(+).

This sequence belongs to the zinc-containing alcohol dehydrogenase family. In terms of assembly, homodimer. Zn(2+) serves as cofactor.

It catalyses the reaction (E)-cinnamyl alcohol + NADP(+) = (E)-cinnamaldehyde + NADPH + H(+). The catalysed reaction is (E)-coniferol + NADP(+) = (E)-coniferaldehyde + NADPH + H(+). It carries out the reaction (E)-sinapyl alcohol + NADP(+) = (E)-sinapaldehyde + NADPH + H(+). The enzyme catalyses (E)-4-coumaroyl alcohol + NADP(+) = (E)-4-coumaraldehyde + NADPH + H(+). It catalyses the reaction (E)-caffeyl alcohol + NADP(+) = (E)-caffeyl aldehyde + NADPH + H(+). Its pathway is aromatic compound metabolism; phenylpropanoid biosynthesis. In terms of biological role, involved in lignin biosynthesis. Catalyzes the final step specific for the production of lignin monomers. Catalyzes the NADPH-dependent reduction of coniferaldehyde, 5-hydroxyconiferaldehyde, sinapaldehyde, 4-coumaraldehyde and caffeyl aldehyde to their respective alcohols. This is Probable cinnamyl alcohol dehydrogenase 6 from Oryza sativa subsp. japonica (Rice).